The sequence spans 299 residues: Trans-aconitate 3-methyltransferase (299 aa).

Ser2 bears the N-acetylserine mark.

Belongs to the methyltransferase superfamily. Tam family.

The protein localises to the cytoplasm. The enzyme catalyses trans-aconitate + S-adenosyl-L-methionine = (E)-2-(methoxycarbonylmethyl)but-2-enedioate + S-adenosyl-L-homocysteine. In terms of biological role, catalyzes the S-adenosylmethionine monomethyl esterification of trans-aconitate and 3-isopropylmalate at high affinity and of other molecules like cis-aconitate, isocitrate, and citrate at lower velocities and affinities. The function of trans-aconitate methylation appears to be in reducing the toxicity of this spontaneous breakdown product of cis-aconitate. The role of 3-isopropylmalate methylation is unclear but may represent a metabolic branch at 3-isopropylmalate, where some of the material is taken in the pathway leading to leucine and some is taken in a pathway to the 3-isopropylmalate methyl ester, a molecule that provides a signal to switch from vegetative to invasive growth in response to amino acid starvation. This is Trans-aconitate 3-methyltransferase (TMT1) from Saccharomyces cerevisiae (strain YJM789) (Baker's yeast).